A 329-amino-acid polypeptide reads, in one-letter code: uncharacterized protein (329 aa).

Positions 38-184 constitute an SIS domain; it reads IVKLILKSQE…MACLMRAKNF (147 aa). 56–61 contacts ATP; it reads GVGKSA. 2 consecutive CBS domains span residues 211 to 267 and 270 to 329; these read QTTN…GVSL and EVRH…GLKA.

The protein belongs to the SIS family. GutQ/KpsF subfamily.

This is an uncharacterized protein from Helicobacter pylori (strain ATCC 700392 / 26695) (Campylobacter pylori).